The sequence spans 54 residues: Ovomucoid (54 aa).

The Kazal-like domain maps to 4 to 54; that stretch reads VDCSDHPKPVCSLEYMPLCGSDSKTYSNKCDFCNAVVESNGTLTLSHFGKC. 3 disulfide bridges follow: Cys-6–Cys-36, Cys-14–Cys-33, and Cys-22–Cys-54. N-linked (GlcNAc...) asparagine glycosylation is present at Asn-43.

It localises to the secreted. This is Ovomucoid from Rhea americana (Greater rhea).